The chain runs to 403 residues: Protein WVD2-like 6 (403 aa).

Disordered regions lie at residues M1–N179 and L254–P403. Positions G25–E56 are enriched in polar residues. Positions S103–S118 are enriched in low complexity. At S113 the chain carries Phosphoserine. 3 stretches are compositionally biased toward basic and acidic residues: residues N120–H132, G139–V153, and Q162–P171. The span at K263–N273 shows a compositional bias: basic residues. Over residues K336–K348 the composition is skewed to low complexity. The segment covering V385–M394 has biased composition (basic and acidic residues).

This sequence belongs to the TPX2 family. As to expression, expressed in seedlings.

The protein localises to the cytoplasm. Its subcellular location is the cytoskeleton. Microtubule-associated protein (MAP) that regulates the orientation of interphase cortical microtubules. This Arabidopsis thaliana (Mouse-ear cress) protein is Protein WVD2-like 6.